Consider the following 169-residue polypeptide: MPNHIVLYQPEIPANTGNISRTCAGTDTYLHLIRPLGFSTDDKMLKRAGLDYWDNVKLSYYDSLDEFFEKNAGGEFYYITKFGRHVYSDVDYSDPNKNYFFVFGKETTGLPDELLQANEENCLRIPMTDHIRSLNLSNTAAVLAYEALRQQSFGALLQEPNYDRKIFKD.

4 residues coordinate S-adenosyl-L-methionine: I79, G104, I125, and S133.

It belongs to the class IV-like SAM-binding methyltransferase superfamily. RNA methyltransferase TrmH family. TrmL subfamily.

It localises to the cytoplasm. It catalyses the reaction cytidine(34) in tRNA + S-adenosyl-L-methionine = 2'-O-methylcytidine(34) in tRNA + S-adenosyl-L-homocysteine + H(+). The enzyme catalyses 5-carboxymethylaminomethyluridine(34) in tRNA(Leu) + S-adenosyl-L-methionine = 5-carboxymethylaminomethyl-2'-O-methyluridine(34) in tRNA(Leu) + S-adenosyl-L-homocysteine + H(+). In terms of biological role, could methylate the ribose at the nucleotide 34 wobble position in tRNA. In Listeria innocua serovar 6a (strain ATCC BAA-680 / CLIP 11262), this protein is Putative tRNA (cytidine(34)-2'-O)-methyltransferase.